Reading from the N-terminus, the 258-residue chain is MKITKIEKKKRLYLIELDNDDSLYVTEDTIVRFMLSKDKVLDNDQLEDMKHFAQLSYGKNLALYFLSFQQRSNKQVADYLRKHEIEEHIIPDIITQLQEEQWIDDTKLADTYIRQNQLNGDKGPQVLKQKLLQKGIASHDIDPILSQTDFSQLAQKVSQKLFDKYQEKLPPKALKDKITQALLTKGFSYDLAKRSLNHLNFDQDNQEIEDLLDKELDKQYRKLSRKYDGYTLKQKLYQALYRKGYNSDDINCKLRNYL.

It belongs to the RecX family.

It localises to the cytoplasm. Functionally, modulates RecA activity. The protein is Regulatory protein RecX of Streptococcus pyogenes serotype M5 (strain Manfredo).